The chain runs to 564 residues: Large neutral amino acids transporter small subunit 3 (564 aa).

The chain crosses the membrane as a helical span at residues 20–40 (VVENLFFSAVLLGWASLLIML). Residues N54 and N57 are each glycosylated (N-linked (GlcNAc...) asparagine). A run of 5 helical transmembrane segments spans residues 78 to 98 (LGFTIGSFLLSATTLPLGILM), 105 to 124 (PLRLVGSACFAASCTLMALA), 131 to 151 (LSPLIFLALSLNGFAGICLTF), 165 to 185 (STFMALMIGSYASSAITFPGI), and 191 to 211 (AGVPFTVIMFTWSGLACLIFL). Phosphoserine occurs at positions 262 and 267. Helical transmembrane passes span 303–323 (IFLWSLVTMGMTQLRVIFYMG) and 357–377 (SIFGVMQLLCLLTCPLIGYIM). The N-linked (GlcNAc...) asparagine glycan is linked to N396. At S398 the chain carries Phosphoserine. 4 helical membrane passes run 424 to 444 (AINAFTLTNILLVGFGIACLI), 451 to 471 (LLAFVLHTIVRGFFHSACGGL), 490 to 510 (LISAVFALLQQLLFMAMVGPL), and 515 to 535 (FWVNLGLLLLSFLGFLLPSYL). N558 carries N-linked (GlcNAc...) asparagine glycosylation.

Belongs to the SLC43A transporter (TC 2.A.1.44) family. In terms of tissue distribution, expressed in the kidney cortex as well as liver, pancreas, and skeletal muscle. In kidney expressed in the glomerular tuft (at protein level). Expressed in liver, skeletal muscle and pancreas (at protein level).

The protein localises to the cell membrane. It localises to the apical cell membrane. It is found in the endoplasmic reticulum membrane. The catalysed reaction is D-leucine(in) = D-leucine(out). The enzyme catalyses L-leucine(in) = L-leucine(out). It carries out the reaction L-isoleucine(in) = L-isoleucine(out). It catalyses the reaction L-methionine(in) = L-methionine(out). The catalysed reaction is L-phenylalanine(in) = L-phenylalanine(out). The enzyme catalyses L-valine(in) = L-valine(out). In terms of biological role, uniport that mediates the transport of neutral amino acids such as L-leucine, L-isoleucine, L-valine, and L-phenylalanine. The transport activity is sodium ions-independent, electroneutral and mediated by a facilitated diffusion. The protein is Large neutral amino acids transporter small subunit 3 of Mus musculus (Mouse).